The primary structure comprises 570 residues: Polypeptide N-acetylgalactosaminyltransferase 2 (570 aa).

The Cytoplasmic segment spans residues methionine 1–arginine 6. Residues methionine 7–tyrosine 24 form a helical; Signal-anchor for type II membrane protein membrane-spanning segment. Over serine 25–glutamine 570 the chain is Lumenal. The O-linked (Xyl...) (chondroitin sulfate) serine glycan is linked to serine 29. 4 disulfide bridges follow: cysteine 125-cysteine 353, cysteine 344-cysteine 422, cysteine 455-cysteine 472, and cysteine 495-cysteine 512. Residues leucine 134–arginine 239 are catalytic subdomain A. Residues threonine 142, aspartate 175, and arginine 200 each coordinate substrate. Residue aspartate 223 participates in Mn(2+) binding. Serine 224 is a substrate binding site. Histidine 225 contacts Mn(2+). Residues proline 299–arginine 361 are catalytic subdomain B. Tryptophan 330 provides a ligand contact to substrate. Histidine 358 serves as a coordination point for Mn(2+). Substrate-binding residues include arginine 361, histidine 364, and tyrosine 366. A Ricin B-type lectin domain is found at glutamine 442 to serine 565. N-linked (GlcNAc...) asparagine glycosylation is present at asparagine 515. The residue at position 535 (serine 535) is a Phosphoserine. A disulfide bridge links cysteine 538 with cysteine 554.

This sequence belongs to the glycosyltransferase 2 family. GalNAc-T subfamily. It depends on Mn(2+) as a cofactor. Widely expressed at high level.

It localises to the golgi apparatus. It is found in the golgi stack membrane. Its subcellular location is the secreted. It catalyses the reaction L-seryl-[protein] + UDP-N-acetyl-alpha-D-galactosamine = a 3-O-[N-acetyl-alpha-D-galactosaminyl]-L-seryl-[protein] + UDP + H(+). The catalysed reaction is L-threonyl-[protein] + UDP-N-acetyl-alpha-D-galactosamine = a 3-O-[N-acetyl-alpha-D-galactosaminyl]-L-threonyl-[protein] + UDP + H(+). Its pathway is protein modification; protein glycosylation. Functionally, catalyzes the initial reaction in O-linked oligosaccharide biosynthesis, the transfer of an N-acetyl-D-galactosamine residue to a serine or threonine residue on the protein receptor. Has a broad spectrum of substrates for peptides such as EA2, Muc5AC, Muc1a, Muc1b. Probably involved in O-linked glycosylation of the immunoglobulin A1 (IgA1) hinge region. Involved in O-linked glycosylation of APOC-III, ANGPTL3 and PLTP. It participates in the regulation of HDL-C metabolism. This is Polypeptide N-acetylgalactosaminyltransferase 2 (Galnt2) from Mus musculus (Mouse).